The primary structure comprises 235 residues: Large ribosomal subunit protein uL1 (235 aa).

This sequence belongs to the universal ribosomal protein uL1 family. Part of the 50S ribosomal subunit.

In terms of biological role, binds directly to 23S rRNA. The L1 stalk is quite mobile in the ribosome, and is involved in E site tRNA release. Protein L1 is also a translational repressor protein, it controls the translation of the L11 operon by binding to its mRNA. This Renibacterium salmoninarum (strain ATCC 33209 / DSM 20767 / JCM 11484 / NBRC 15589 / NCIMB 2235) protein is Large ribosomal subunit protein uL1.